The sequence spans 474 residues: Uronate isomerase (474 aa).

This sequence belongs to the metallo-dependent hydrolases superfamily. Uronate isomerase family.

It carries out the reaction D-glucuronate = D-fructuronate. It catalyses the reaction aldehydo-D-galacturonate = keto-D-tagaturonate. It participates in carbohydrate metabolism; pentose and glucuronate interconversion. This is Uronate isomerase from Photorhabdus laumondii subsp. laumondii (strain DSM 15139 / CIP 105565 / TT01) (Photorhabdus luminescens subsp. laumondii).